The primary structure comprises 396 residues: Protein NDRG1-B (396 aa).

The disordered stretch occupies residues 326-396 (RSRTGSAASS…NTPKSMEVSC (71 aa)). Low complexity predominate over residues 327 to 340 (SRTGSAASSSSQDG). Repeat copies occupy residues 340–349 (GNRSRSHTNE), 350–359 (GSRSRSQTGD), 360–369 (GNRSRAHTGD), and 370–379 (GNRSRSHTDT). The segment at 340-379 (GNRSRSHTNEGSRSRSQTGDGNRSRAHTGDGNRSRSHTDT) is 4 X 10 AA tandem repeats of G-[NS]-R-S-R-[AS]-[HQ]-T-[DGN]-[DET]. Residues 366-377 (HTGDGNRSRSHT) are compositionally biased toward basic and acidic residues. The segment covering 378-390 (DTNNVNSDHNTPK) has biased composition (polar residues).

It belongs to the NDRG family.

Its function is as follows. May be involved in pronephros development, after specification of the pronephros. This Xenopus laevis (African clawed frog) protein is Protein NDRG1-B (ndrg1-b).